A 397-amino-acid chain; its full sequence is Histidinol-phosphate aminotransferase (397 aa).

Lys247 carries the post-translational modification N6-(pyridoxal phosphate)lysine.

The protein belongs to the class-II pyridoxal-phosphate-dependent aminotransferase family. Histidinol-phosphate aminotransferase subfamily. Homodimer. Requires pyridoxal 5'-phosphate as cofactor.

The enzyme catalyses L-histidinol phosphate + 2-oxoglutarate = 3-(imidazol-4-yl)-2-oxopropyl phosphate + L-glutamate. Its pathway is amino-acid biosynthesis; L-histidine biosynthesis; L-histidine from 5-phospho-alpha-D-ribose 1-diphosphate: step 7/9. In Frankia casuarinae (strain DSM 45818 / CECT 9043 / HFP020203 / CcI3), this protein is Histidinol-phosphate aminotransferase.